Here is a 271-residue protein sequence, read N- to C-terminus: Oligodendrocyte transcription factor 1 (271 aa).

Residues 38–117 (YRQPPSSSSS…RKINSRERKR (80 aa)) form a disordered region. Positions 43–61 (SSSSSSTSSTSSTSSSSTT) are enriched in low complexity. The bHLH domain occupies 105-164 (QLRRKINSRERKRMQDLNLAMDALREVILPYSAAHCQGAPGRKLSKIATLLLARNYILLL).

As to expression, expressed in the brain, in oligodendrocytes. Strongly expressed in oligodendrogliomas, while expression is weak to moderate in astrocytomas. Expression in glioblastomas is highly variable.

The protein localises to the nucleus. Its function is as follows. Promotes formation and maturation of oligodendrocytes, especially within the brain. Cooperates with OLIG2 to establish the pMN domain of the embryonic neural tube. The chain is Oligodendrocyte transcription factor 1 (OLIG1) from Homo sapiens (Human).